A 204-amino-acid chain; its full sequence is Small ribosomal subunit protein uS4 (204 aa).

Positions 93-156 constitute an S4 RNA-binding domain; the sequence is SRLSSVLYHS…AKIPILIEAE (64 aa).

The protein belongs to the universal ribosomal protein uS4 family. In terms of assembly, part of the 30S ribosomal subunit. Contacts protein S5. The interaction surface between S4 and S5 is involved in control of translational fidelity.

Its function is as follows. One of the primary rRNA binding proteins, it binds directly to 16S rRNA where it nucleates assembly of the body of the 30S subunit. Functionally, with S5 and S12 plays an important role in translational accuracy. This is Small ribosomal subunit protein uS4 from Wolbachia pipientis subsp. Culex pipiens (strain wPip).